The chain runs to 98 residues: MPFIYINTALAYSMSLLGLLIYRSHLMSSLLCLEGMMLSLFIMMTTMTLNMHLMLMYMLPIILLVFAACEAAVGLALLILISNLYGLDYVQNLNLLQC.

3 helical membrane passes run 1 to 21 (MPFIYINTALAYSMSLLGLLI), 29 to 49 (SLLCLEGMMLSLFIMMTTMTL), and 61 to 81 (IILLVFAACEAAVGLALLILI).

Belongs to the complex I subunit 4L family. As to quaternary structure, core subunit of respiratory chain NADH dehydrogenase (Complex I) which is composed of 45 different subunits.

Its subcellular location is the mitochondrion inner membrane. The catalysed reaction is a ubiquinone + NADH + 5 H(+)(in) = a ubiquinol + NAD(+) + 4 H(+)(out). Functionally, core subunit of the mitochondrial membrane respiratory chain NADH dehydrogenase (Complex I) which catalyzes electron transfer from NADH through the respiratory chain, using ubiquinone as an electron acceptor. Part of the enzyme membrane arm which is embedded in the lipid bilayer and involved in proton translocation. In Cebus albifrons (White-fronted capuchin), this protein is NADH-ubiquinone oxidoreductase chain 4L (MT-ND4L).